Here is a 159-residue protein sequence, read N- to C-terminus: Ribosomal RNA large subunit methyltransferase H (159 aa).

S-adenosyl-L-methionine contacts are provided by residues Gly-108 and 127-132; that span reads FGKLTM.

It belongs to the RNA methyltransferase RlmH family. As to quaternary structure, homodimer.

Its subcellular location is the cytoplasm. The catalysed reaction is pseudouridine(1915) in 23S rRNA + S-adenosyl-L-methionine = N(3)-methylpseudouridine(1915) in 23S rRNA + S-adenosyl-L-homocysteine + H(+). Functionally, specifically methylates the pseudouridine at position 1915 (m3Psi1915) in 23S rRNA. The sequence is that of Ribosomal RNA large subunit methyltransferase H from Lactobacillus acidophilus (strain ATCC 700396 / NCK56 / N2 / NCFM).